Consider the following 81-residue polypeptide: Sulfur carrier protein TusA (81 aa).

C19 (cysteine persulfide intermediate) is an active-site residue.

This sequence belongs to the sulfur carrier protein TusA family.

Its subcellular location is the cytoplasm. In terms of biological role, sulfur carrier protein which probably makes part of a sulfur-relay system. This chain is Sulfur carrier protein TusA, found in Shewanella sediminis (strain HAW-EB3).